A 349-amino-acid chain; its full sequence is ATP phosphoribosyltransferase regulatory subunit (349 aa).

Residues 325–349 (ANGRGRGVRPRRASARGGRAGTRPR) are disordered. A compositionally biased stretch (low complexity) spans 339–349 (ARGGRAGTRPR).

It belongs to the class-II aminoacyl-tRNA synthetase family. HisZ subfamily. As to quaternary structure, heteromultimer composed of HisG and HisZ subunits.

The protein resides in the cytoplasm. It functions in the pathway amino-acid biosynthesis; L-histidine biosynthesis; L-histidine from 5-phospho-alpha-D-ribose 1-diphosphate: step 1/9. Required for the first step of histidine biosynthesis. May allow the feedback regulation of ATP phosphoribosyltransferase activity by histidine. In Anaeromyxobacter dehalogenans (strain 2CP-C), this protein is ATP phosphoribosyltransferase regulatory subunit.